The sequence spans 401 residues: Argininosuccinate synthase (401 aa).

9-17 (AYSGGLDTS) contributes to the ATP binding site. Position 87 (Tyr-87) interacts with L-citrulline. An ATP-binding site is contributed by Gly-117. L-aspartate is bound by residues Thr-119, Asn-123, and Asp-124. An L-citrulline-binding site is contributed by Asn-123. 5 residues coordinate L-citrulline: Arg-127, Ser-176, Ser-185, Glu-261, and Tyr-273.

It belongs to the argininosuccinate synthase family. Type 1 subfamily. Homotetramer.

The protein resides in the cytoplasm. It carries out the reaction L-citrulline + L-aspartate + ATP = 2-(N(omega)-L-arginino)succinate + AMP + diphosphate + H(+). It participates in amino-acid biosynthesis; L-arginine biosynthesis; L-arginine from L-ornithine and carbamoyl phosphate: step 2/3. This Prosthecochloris aestuarii (strain DSM 271 / SK 413) protein is Argininosuccinate synthase.